Here is a 673-residue protein sequence, read N- to C-terminus: Annexin A6 (673 aa).

Ala2 carries the N-acetylalanine modification. Phosphoserine is present on Ser13. 8 Annexin repeats span residues 20–91 (FDAN…NLMR), 92–163 (PLAY…VLLQ), 175–247 (DLVQ…AVVK), 251–322 (STPE…KLCG), 363–434 (FNPD…GLMM), 435–506 (PPAH…SLAT), 521–595 (EDAQ…AIVQ), and 599–670 (NKPL…ALCG). Residue Tyr30 is modified to Phosphotyrosine. N6-acetyllysine occurs at positions 63, 68, 75, and 81. Tyr201 is modified (phosphotyrosine). An N6-acetyllysine mark is found at Lys306, Lys370, and Lys418. Ser422 is subject to Phosphoserine. An N6-acetyllysine modification is found at Lys483. At Ser537 the chain carries Phosphoserine. An N6-acetyllysine modification is found at Lys620.

The protein belongs to the annexin family.

The protein resides in the cytoplasm. It localises to the melanosome. In terms of biological role, may associate with CD21. May regulate the release of Ca(2+) from intracellular stores. The chain is Annexin A6 (Anxa6) from Mus musculus (Mouse).